We begin with the raw amino-acid sequence, 311 residues long: tRNA-cytidine(32) 2-sulfurtransferase (311 aa).

Residues 47–52 (SGGKDS) carry the PP-loop motif motif. 3 residues coordinate [4Fe-4S] cluster: Cys122, Cys125, and Cys213.

Belongs to the TtcA family. Homodimer. Requires Mg(2+) as cofactor. [4Fe-4S] cluster serves as cofactor.

It is found in the cytoplasm. The enzyme catalyses cytidine(32) in tRNA + S-sulfanyl-L-cysteinyl-[cysteine desulfurase] + AH2 + ATP = 2-thiocytidine(32) in tRNA + L-cysteinyl-[cysteine desulfurase] + A + AMP + diphosphate + H(+). It functions in the pathway tRNA modification. Its function is as follows. Catalyzes the ATP-dependent 2-thiolation of cytidine in position 32 of tRNA, to form 2-thiocytidine (s(2)C32). The sulfur atoms are provided by the cysteine/cysteine desulfurase (IscS) system. This is tRNA-cytidine(32) 2-sulfurtransferase from Shigella boydii serotype 18 (strain CDC 3083-94 / BS512).